The chain runs to 313 residues: Biotin synthase (313 aa).

Residues 37-263 (YYGKKVKLNM…INPTKEIRIA (227 aa)) enclose the Radical SAM core domain. [4Fe-4S] cluster contacts are provided by Cys55, Cys59, and Cys62. Residues Cys98, Cys131, Cys191, and Arg261 each coordinate [2Fe-2S] cluster.

This sequence belongs to the radical SAM superfamily. Biotin synthase family. In terms of assembly, homodimer. [4Fe-4S] cluster serves as cofactor. It depends on [2Fe-2S] cluster as a cofactor.

It carries out the reaction (4R,5S)-dethiobiotin + (sulfur carrier)-SH + 2 reduced [2Fe-2S]-[ferredoxin] + 2 S-adenosyl-L-methionine = (sulfur carrier)-H + biotin + 2 5'-deoxyadenosine + 2 L-methionine + 2 oxidized [2Fe-2S]-[ferredoxin]. It functions in the pathway cofactor biosynthesis; biotin biosynthesis; biotin from 7,8-diaminononanoate: step 2/2. Catalyzes the conversion of dethiobiotin (DTB) to biotin by the insertion of a sulfur atom into dethiobiotin via a radical-based mechanism. This chain is Biotin synthase, found in Staphylococcus epidermidis (strain ATCC 12228 / FDA PCI 1200).